Reading from the N-terminus, the 322-residue chain is UDP-N-acetylenolpyruvoylglucosamine reductase (322 aa).

The region spanning 36–202 (RAGGPAQVLF…TSVLFEGVPG (167 aa)) is the FAD-binding PCMH-type domain. Arg182 is an active-site residue. Ser231 acts as the Proton donor in catalysis. The active site involves Glu301.

This sequence belongs to the MurB family. FAD serves as cofactor.

The protein localises to the cytoplasm. It catalyses the reaction UDP-N-acetyl-alpha-D-muramate + NADP(+) = UDP-N-acetyl-3-O-(1-carboxyvinyl)-alpha-D-glucosamine + NADPH + H(+). It functions in the pathway cell wall biogenesis; peptidoglycan biosynthesis. Cell wall formation. The sequence is that of UDP-N-acetylenolpyruvoylglucosamine reductase from Brucella suis (strain ATCC 23445 / NCTC 10510).